A 380-amino-acid chain; its full sequence is MGFKLISLLLLFLPLLTVTILSGVEQAFASDKALLVTGRNITADGGRSSLRGKKQRRASGCNLFQGRWVFDASYPFYDSSKCPFIDGEFDCLKFGRPDKQFLKYSWQPESCTIPRFDGGAFLRKYRGKRVMFVGDSLSLNMWESLACMIHASVPNAKTTFLKRTPLSTLTFQEYGVTLYLYRTPYIVDISKERVGRVLNLGAIEGGADAWKNMDVLVFNSWHWWTHKGQSQGWDYIRDGSSLVRDMNRLDAFYKGLSTWARWVDQNVDTAKTRVFFQGISPTHYEGREWNEPRKTCSGQMQPLGGSSYPSGQPPSSGVVSKVLSSMKKPVTLLDITTLSQLRKDAHPSSYGGDGGTDCSHWCLPGLPDTWNQLLYAALTM.

Residues serine 7–alanine 29 form a helical; Signal-anchor for type II membrane protein membrane-spanning segment. The GDS motif motif lies at glycine 134–serine 136. A DCXHWCLPGXXDXWN motif motif is present at residues aspartate 357 to asparagine 371.

This sequence belongs to the PC-esterase family. TBL subfamily.

The protein resides in the membrane. In terms of biological role, may act as a bridging protein that binds pectin and other cell wall polysaccharides. Probably involved in maintaining esterification of pectins. May be involved in the specific O-acetylation of cell wall polymers. The sequence is that of Protein trichome birefringence-like 38 (TBL38) from Arabidopsis thaliana (Mouse-ear cress).